The sequence spans 288 residues: ATP synthase gamma chain (288 aa).

Belongs to the ATPase gamma chain family. F-type ATPases have 2 components, CF(1) - the catalytic core - and CF(0) - the membrane proton channel. CF(1) has five subunits: alpha(3), beta(3), gamma(1), delta(1), epsilon(1). CF(0) has three main subunits: a, b and c.

Its subcellular location is the cell inner membrane. In terms of biological role, produces ATP from ADP in the presence of a proton gradient across the membrane. The gamma chain is believed to be important in regulating ATPase activity and the flow of protons through the CF(0) complex. This is ATP synthase gamma chain from Vibrio cholerae serotype O1 (strain ATCC 39541 / Classical Ogawa 395 / O395).